Consider the following 838-residue polypeptide: E3 ubiquitin-protein ligase RNF19A (838 aa).

The TRIAD supradomain stretch occupies residues 128 to 351 (DFIECPLCLL…LSPSGCTFWG (224 aa)). Residues Cys-132, Cys-135, Cys-150, His-152, Cys-155, Cys-158, Cys-176, Cys-179, Cys-219, Cys-224, Cys-241, Cys-246, Cys-251, Cys-254, His-259, Cys-264, Cys-301, and Cys-304 each coordinate Zn(2+). An RING-type 1 zinc finger spans residues 132 to 179 (CPLCLLRHSKDRFPEIMTCHHRSCVDCLRQYLRIEISESRVNISCPEC). The segment at 199-264 (EKYEEFMLRR…KQIWHPNQTC (66 aa)) adopts an IBR-type zinc-finger fold. Residues 301-332 (CPRCAAYIIKMNDGSCNHMTCAVCGCEFCWLC) form an RING-type 2; atypical zinc finger. The active site involves Cys-316. Positions 321, 324, 329, 332, 340, and 347 each coordinate Zn(2+). Helical transmembrane passes span 368-388 (LVGA…AMII) and 424-444 (VIVS…IMLA). Disordered stretches follow at residues 622 to 685 (SKPS…SNMK) and 700 to 721 (QQST…PSVA). Ser-631 is modified (phosphoserine). Residues 631 to 644 (SGSSSVDDGSAARS) show a composition bias toward low complexity. The interval 660-838 (ATKWSKEATA…ELKVAIQTDI (179 aa)) is interaction with CASR. Basic residues predominate over residues 671 to 683 (KKSKSGKLRKKSN). The span at 700–717 (QQSTNSSEFEAPSLSDSM) shows a compositional bias: polar residues.

The protein belongs to the RBR family. RNF19 subfamily. As to quaternary structure, interacts with UBE2L3 and UBE2L6. Also interacts with transcription factor Sp1. Interacts with SNCAIP, CASR and VCP.

It is found in the membrane. Its subcellular location is the cytoplasm. The protein resides in the cytoskeleton. The protein localises to the microtubule organizing center. It localises to the centrosome. It carries out the reaction [E2 ubiquitin-conjugating enzyme]-S-ubiquitinyl-L-cysteine + [acceptor protein]-L-lysine = [E2 ubiquitin-conjugating enzyme]-L-cysteine + [acceptor protein]-N(6)-ubiquitinyl-L-lysine.. Its pathway is protein modification; protein ubiquitination. E3 ubiquitin-protein ligase which accepts ubiquitin from E2 ubiquitin-conjugating enzymes UBE2L3 and UBE2L6 in the form of a thioester and then directly transfers the ubiquitin to targeted substrates, such as SNCAIP or CASR. The polypeptide is E3 ubiquitin-protein ligase RNF19A (RNF19A) (Sus scrofa (Pig)).